The chain runs to 284 residues: Digeranylgeranylglyceryl phosphate synthase (284 aa).

7 helical membrane-spanning segments follow: residues 10 to 30 (IHNV…SSMW), 37 to 57 (LILA…INDV), 76 to 98 (AVSL…ILSA), 102 to 119 (YLQF…IFYA), 126 to 146 (GIYG…YGGL), 217 to 237 (LPLF…FLYI), and 260 to 280 (GSAF…QFLF).

It belongs to the UbiA prenyltransferase family. DGGGP synthase subfamily. Mg(2+) serves as cofactor.

The protein localises to the cell membrane. It carries out the reaction sn-3-O-(geranylgeranyl)glycerol 1-phosphate + (2E,6E,10E)-geranylgeranyl diphosphate = 2,3-bis-O-(geranylgeranyl)-sn-glycerol 1-phosphate + diphosphate. The protein operates within membrane lipid metabolism; glycerophospholipid metabolism. Prenyltransferase that catalyzes the transfer of the geranylgeranyl moiety of geranylgeranyl diphosphate (GGPP) to the C2 hydroxyl of (S)-3-O-geranylgeranylglyceryl phosphate (GGGP). This reaction is the second ether-bond-formation step in the biosynthesis of archaeal membrane lipids. The sequence is that of Digeranylgeranylglyceryl phosphate synthase from Metallosphaera sedula (strain ATCC 51363 / DSM 5348 / JCM 9185 / NBRC 15509 / TH2).